A 179-amino-acid polypeptide reads, in one-letter code: Large ribosomal subunit protein uL5 (179 aa).

This sequence belongs to the universal ribosomal protein uL5 family. As to quaternary structure, part of the 50S ribosomal subunit; part of the 5S rRNA/L5/L18/L25 subcomplex. Contacts the 5S rRNA and the P site tRNA. Forms a bridge to the 30S subunit in the 70S ribosome.

Its function is as follows. This is one of the proteins that bind and probably mediate the attachment of the 5S RNA into the large ribosomal subunit, where it forms part of the central protuberance. In the 70S ribosome it contacts protein S13 of the 30S subunit (bridge B1b), connecting the 2 subunits; this bridge is implicated in subunit movement. Contacts the P site tRNA; the 5S rRNA and some of its associated proteins might help stabilize positioning of ribosome-bound tRNAs. This Francisella tularensis subsp. mediasiatica (strain FSC147) protein is Large ribosomal subunit protein uL5.